The sequence spans 194 residues: MLGLCLHQVRYAAQDIPAAKSARARGSYLRVSFKNTRETAQAINGMKLQRALAFLENVKNKTEVVPFRRYAGSIGRTAQGKQWGVSKARWPVKSAQFLLDLLKNAEANADTKGLDTGNLIVKHIQVNQAPKGRRRTYRAHGRINPYMTNPCHIELILTEGEETVQKAPQVVKKEGAHLSSRQRGAQIRRALIEA.

The protein belongs to the universal ribosomal protein uL22 family.

The chain is Large ribosomal subunit protein uL22 (rpl17) from Aspergillus fumigatus (strain ATCC MYA-4609 / CBS 101355 / FGSC A1100 / Af293) (Neosartorya fumigata).